A 314-amino-acid chain; its full sequence is tRNA-cytidine(32) 2-sulfurtransferase (314 aa).

The PP-loop motif motif lies at 49 to 54 (SGGKDS). [4Fe-4S] cluster contacts are provided by cysteine 124, cysteine 127, and cysteine 215.

The protein belongs to the TtcA family. Homodimer. Requires Mg(2+) as cofactor. [4Fe-4S] cluster serves as cofactor.

The protein resides in the cytoplasm. The enzyme catalyses cytidine(32) in tRNA + S-sulfanyl-L-cysteinyl-[cysteine desulfurase] + AH2 + ATP = 2-thiocytidine(32) in tRNA + L-cysteinyl-[cysteine desulfurase] + A + AMP + diphosphate + H(+). The protein operates within tRNA modification. Its function is as follows. Catalyzes the ATP-dependent 2-thiolation of cytidine in position 32 of tRNA, to form 2-thiocytidine (s(2)C32). The sulfur atoms are provided by the cysteine/cysteine desulfurase (IscS) system. The chain is tRNA-cytidine(32) 2-sulfurtransferase from Histophilus somni (strain 2336) (Haemophilus somnus).